A 1496-amino-acid polypeptide reads, in one-letter code: DNA-directed RNA polymerase subunit beta' (1496 aa).

Cys-67, Cys-69, Cys-82, and Cys-85 together coordinate Zn(2+). Residues Asp-499, Asp-501, and Asp-503 each contribute to the Mg(2+) site. Zn(2+) contacts are provided by Cys-867, Cys-943, Cys-950, and Cys-953.

Belongs to the RNA polymerase beta' chain family. As to quaternary structure, the RNAP catalytic core consists of 2 alpha, 1 beta, 1 beta' and 1 omega subunit. When a sigma factor is associated with the core the holoenzyme is formed, which can initiate transcription. Mg(2+) serves as cofactor. Requires Zn(2+) as cofactor.

It carries out the reaction RNA(n) + a ribonucleoside 5'-triphosphate = RNA(n+1) + diphosphate. DNA-dependent RNA polymerase catalyzes the transcription of DNA into RNA using the four ribonucleoside triphosphates as substrates. This chain is DNA-directed RNA polymerase subunit beta', found in Chlorobium limicola (strain DSM 245 / NBRC 103803 / 6330).